A 257-amino-acid chain; its full sequence is 1-(5-phosphoribosyl)-5-[(5-phosphoribosylamino)methylideneamino] imidazole-4-carboxamide isomerase (257 aa).

The active-site Proton acceptor is the Asp8. Asp129 serves as the catalytic Proton donor.

This sequence belongs to the HisA/HisF family.

It localises to the cytoplasm. It carries out the reaction 1-(5-phospho-beta-D-ribosyl)-5-[(5-phospho-beta-D-ribosylamino)methylideneamino]imidazole-4-carboxamide = 5-[(5-phospho-1-deoxy-D-ribulos-1-ylimino)methylamino]-1-(5-phospho-beta-D-ribosyl)imidazole-4-carboxamide. Its pathway is amino-acid biosynthesis; L-histidine biosynthesis; L-histidine from 5-phospho-alpha-D-ribose 1-diphosphate: step 4/9. The sequence is that of 1-(5-phosphoribosyl)-5-[(5-phosphoribosylamino)methylideneamino] imidazole-4-carboxamide isomerase from Thermosynechococcus vestitus (strain NIES-2133 / IAM M-273 / BP-1).